A 36-amino-acid polypeptide reads, in one-letter code: Cytochrome b6-f complex subunit 7 (36 aa).

Residues 9-29 traverse the membrane as a helical segment; the sequence is NGAFIMIGLTLLGLAWGFVII.

Belongs to the PetM family. The 4 large subunits of the cytochrome b6-f complex are cytochrome b6, subunit IV (17 kDa polypeptide, PetD), cytochrome f and the Rieske protein, while the 4 small subunits are PetG, PetL, PetM and PetN. The complex functions as a dimer.

Its subcellular location is the cellular thylakoid membrane. In terms of biological role, component of the cytochrome b6-f complex, which mediates electron transfer between photosystem II (PSII) and photosystem I (PSI), cyclic electron flow around PSI, and state transitions. The sequence is that of Cytochrome b6-f complex subunit 7 from Synechocystis sp. (strain ATCC 27184 / PCC 6803 / Kazusa).